We begin with the raw amino-acid sequence, 72 residues long: UPF0154 protein BH2350 (72 aa).

The helical transmembrane segment at 3 to 23 (WMILLWITLGIVIGIAIGFFI) threads the bilayer.

It belongs to the UPF0154 family.

The protein localises to the membrane. The protein is UPF0154 protein BH2350 of Halalkalibacterium halodurans (strain ATCC BAA-125 / DSM 18197 / FERM 7344 / JCM 9153 / C-125) (Bacillus halodurans).